Reading from the N-terminus, the 297-residue chain is MSAKAAEGYEQIEVDVVAVWKEGYVYENRGSTSVDQKITITKGMKNVNSETRTVTATHSIGSTISTGDAFEIGSVEVSYSHSHEESQVSMTETEVYESKVIEHTITIPPTSKFTRWQLNADVGGADIEYMYLIDEVTPIGGTQSIPQVITSRAKIIVGRQIILGKTEIRIKHAERKEYMTVVSRKSWPAATLGHSKLFKFVLYEDWGGFRIKTLNTMYSGYEYAYSSDQGGIYFDQGTDNPKQRWAINKSLPLRHGDVVTFMNKYFTRSGLCYDDGPATNVYCLDKREDKWILEVVG.

The tract at residues 10 to 33 (EQIEVDVVAVWKEGYVYENRGSTS) is N-terminal cap domain. Residues 34–107 (VDQKITITKG…SKVIEHTITI (74 aa)) are beta-hairpin domain. Positions 108-156 (PPTSKFTRWQLNADVGGADIEYMYLIDEVTPIGGTQSIPQVITSRAKII) are N-terminal cap domain. The C-terminal receptor-binding domain stretch occupies residues 157-297 (VGRQIILGKT…EDKWILEVVG (141 aa)). Positions 185, 227, 233, and 282 each coordinate an N-(acyl)-sphingosylphosphocholine. Cysteine 272 and cysteine 283 are disulfide-bonded.

This sequence belongs to the lysenin family. As to quaternary structure, binds to sphingomyelin as a monomer by using its C-terminal domain. Forms a nonamer when sphingomyelin/lysenin ratio is lower than ca 500. Oligomerization, but not binding, is influenced by the fluidity of sphingomyelin. As to expression, expressed by coelomocytes.

The protein resides in the secreted. Its subcellular location is the target cell membrane. In terms of biological role, pore-forming toxin that defensively acts against parasitic microorganisms by forming pores in sphingomyelin-containing membranes. Has hemolytic activity and is also cytotoxic to spermatozoa of some species of invertebrates and many species of vertebrates and to amphibian larvae, guinea pig polymorphonuclear leukocytes, chicken fibroblasts, normal spleen cells and various tumor cells. Is lethal for various species of reptiles, amphibian, birds and mammals. Induces smooth muscle contraction. It binds sphingomyelin and induces hemolysis in the same manner as lysenin-related protein 2, and is 10-fold more effective than lysenin-related protein 1. This is Lysenin from Eisenia fetida (Red wiggler worm).